Consider the following 125-residue polypeptide: SOSS complex subunit C homolog B (125 aa).

Disordered regions lie at residues Pro-44–Phe-73 and Pro-105–Lys-125.

This sequence belongs to the SOSS-C family.

This is SOSS complex subunit C homolog B from Drosophila willistoni (Fruit fly).